The sequence spans 531 residues: Ultra-long-chain fatty acid omega-hydroxylase (531 aa).

At 1 to 22 (MLPITDRLLHLLGLEKTAFRIY) the chain is on the lumenal side. The helical transmembrane segment at 23-43 (AVSTLLLFLLFFLFRLLLRFL) threads the bilayer. At 44–531 (RLCRSFYITC…LKVEPLPPRA (488 aa)) the chain is on the cytoplasmic side. Positions 335 and 475 each coordinate heme.

Belongs to the cytochrome P450 family. Heme serves as cofactor.

The protein resides in the endoplasmic reticulum membrane. Its subcellular location is the microsome membrane. It carries out the reaction triacontanoate + reduced [NADPH--hemoprotein reductase] + O2 = omega-hydroxy-triacontanoate + oxidized [NADPH--hemoprotein reductase] + H2O + H(+). The enzyme catalyses an omega-methyl-ultra-long-chain fatty acid + reduced [NADPH--hemoprotein reductase] + O2 = an omega-hydroxy-ultra-long-chain fatty acid + oxidized [NADPH--hemoprotein reductase] + H2O + H(+). In terms of biological role, a cytochrome P450 monooxygenase involved in epidermal ceramide biosynthesis. Hydroxylates the terminal carbon (omega-hydroxylation) of ultra-long-chain fatty acyls (C28-C36) prior to ceramide synthesis. Contributes to the synthesis of three classes of omega-hydroxy-ultra-long chain fatty acylceramides having sphingosine, 6-hydroxysphingosine and phytosphingosine bases, all major lipid components that underlie the permeability barrier of the stratum corneum. Mechanistically, uses molecular oxygen inserting one oxygen atom into a substrate, and reducing the second into a water molecule, with two electrons provided by NADPH via cytochrome P450 reductase (CPR; NADPH-ferrihemoprotein reductase). The polypeptide is Ultra-long-chain fatty acid omega-hydroxylase (Homo sapiens (Human)).